The primary structure comprises 660 residues: tRNA 5-methylaminomethyl-2-thiouridine biosynthesis bifunctional protein MnmC (660 aa).

The segment at 1–242 is tRNA (mnm(5)s(2)U34)-methyltransferase; that stretch reads MTDRIVPATL…KRAMLVGEFA (242 aa). Residues 266-660 are FAD-dependent cmnm(5)s(2)U34 oxidoreductase; sequence IGAGLAGCAV…VRALRHGRVA (395 aa).

This sequence in the N-terminal section; belongs to the methyltransferase superfamily. tRNA (mnm(5)s(2)U34)-methyltransferase family. In the C-terminal section; belongs to the DAO family. FAD is required as a cofactor.

The protein resides in the cytoplasm. The catalysed reaction is 5-aminomethyl-2-thiouridine(34) in tRNA + S-adenosyl-L-methionine = 5-methylaminomethyl-2-thiouridine(34) in tRNA + S-adenosyl-L-homocysteine + H(+). Catalyzes the last two steps in the biosynthesis of 5-methylaminomethyl-2-thiouridine (mnm(5)s(2)U) at the wobble position (U34) in tRNA. Catalyzes the FAD-dependent demodification of cmnm(5)s(2)U34 to nm(5)s(2)U34, followed by the transfer of a methyl group from S-adenosyl-L-methionine to nm(5)s(2)U34, to form mnm(5)s(2)U34. This Burkholderia pseudomallei (strain 1710b) protein is tRNA 5-methylaminomethyl-2-thiouridine biosynthesis bifunctional protein MnmC.